The chain runs to 338 residues: Electron transfer flavoprotein subunit alpha (338 aa).

Residue 275 to 303 coordinates FAD; the sequence is IYIACAISGAIQPLAGMTGSDCIIAINKD.

It belongs to the ETF alpha-subunit/FixB family. As to quaternary structure, heterodimer of an alpha and a beta subunit. FAD is required as a cofactor.

In terms of biological role, the electron transfer flavoprotein serves as a specific electron acceptor for other dehydrogenases. It transfers the electrons to the main respiratory chain via ETF-ubiquinone oxidoreductase (ETF dehydrogenase). This chain is Electron transfer flavoprotein subunit alpha (etfA), found in Megasphaera elsdenii.